We begin with the raw amino-acid sequence, 446 residues long: Tubulin beta-2 chain (446 aa).

8 residues coordinate GTP: Gln11, Glu69, Ser138, Gly142, Thr143, Gly144, Asn204, and Asn226. Residue Glu69 coordinates Mg(2+).

It belongs to the tubulin family. Dimer of alpha and beta chains. A typical microtubule is a hollow water-filled tube with an outer diameter of 25 nm and an inner diameter of 15 nM. Alpha-beta heterodimers associate head-to-tail to form protofilaments running lengthwise along the microtubule wall with the beta-tubulin subunit facing the microtubule plus end conferring a structural polarity. Microtubules usually have 13 protofilaments but different protofilament numbers can be found in some organisms and specialized cells. Mg(2+) is required as a cofactor.

The protein resides in the cytoplasm. It localises to the cytoskeleton. Its function is as follows. Tubulin is the major constituent of microtubules, a cylinder consisting of laterally associated linear protofilaments composed of alpha- and beta-tubulin heterodimers. Microtubules grow by the addition of GTP-tubulin dimers to the microtubule end, where a stabilizing cap forms. Below the cap, tubulin dimers are in GDP-bound state, owing to GTPase activity of alpha-tubulin. This chain is Tubulin beta-2 chain (tub2), found in Hypocrea rufa (Trichoderma viride).